The following is a 449-amino-acid chain: Heterogeneous nuclear ribonucleoprotein H2 (449 aa).

An N-acetylmethionine modification is found at Met-1. At Met-2 the chain carries N-acetylmethionine; in Heterogeneous nuclear ribonucleoprotein H2, N-terminally processed. Positions 11–90 (FVVKVRGLPW…RYVEVFKSNS (80 aa)) constitute an RRM 1 domain. Ser-23 is subject to Phosphoserine. Lys-35 is covalently cross-linked (Glycyl lysine isopeptide (Lys-Gly) (interchain with G-Cter in SUMO2)). Phosphoserine occurs at positions 54 and 63. A Glycyl lysine isopeptide (Lys-Gly) (interchain with G-Cter in SUMO2) cross-link involves residue Lys-87. A Phosphoserine modification is found at Ser-90. Residue Lys-98 forms a Glycyl lysine isopeptide (Lys-Gly) (interchain with G-Cter in SUMO2) linkage. An RRM 2 domain is found at 111–188 (GFVRLRGLPF…RYIEIFKSSR (78 aa)). Arg-233 bears the Dimethylated arginine; alternate mark. The residue at position 233 (Arg-233) is an Omega-N-methylarginine; alternate. Residues 234–249 (GAYGGGYGGYDDYGGY) form a 1-1 repeat. Residues 234-433 (GAYGGGYGGY…YGGQSSMSGY (200 aa)) form a 2 X 16 AA Gly-rich approximate repeats region. Phosphotyrosine is present on Tyr-246. Residues 289–364 (HCVHMRGLPY…RYVELFLNST (76 aa)) enclose the RRM 3 domain. The residue at position 310 (Ser-310) is a Phosphoserine. 3 tandem repeats follow at residues 354–372 (HRYV…GGAY), 374–392 (HSYV…GGAY), and 418–433 (AGYG…MSGY). Residues 354-392 (HRYVELFLNSTAGTSGGAYDHSYVELFLNSTAGASGGAY) form a 2 X 19 AA perfect repeats region.

In terms of assembly, component of a ribonucleoprotein complex containing mRNAs and RNA-binding proteins including DDX5, HNRNPH2 and SRSF1 as well as splicing regulator ARVCF. Interacts with TXNL4/DIM1.

The protein localises to the nucleus. The protein resides in the nucleoplasm. This protein is a component of the heterogeneous nuclear ribonucleoprotein (hnRNP) complexes which provide the substrate for the processing events that pre-mRNAs undergo before becoming functional, translatable mRNAs in the cytoplasm. Binds poly(RG). The polypeptide is Heterogeneous nuclear ribonucleoprotein H2 (Hnrnph2) (Rattus norvegicus (Rat)).